The chain runs to 268 residues: Phosphatidylglycerol--prolipoprotein diacylglyceryl transferase (268 aa).

Helical transmembrane passes span 27–47, 66–86, 104–124, 130–150, 181–201, 208–228, and 242–262; these read PALRWYGFTYLVGFVAAMWLL, LLFYGFLGVILGGRIGYVLFY, GGMSFHGGLIGVITAMIYITW, FFAVADMVAPVVPIGLGAGRI, PSQLYQFALEGVALFLLLYWF, VGAVSGMFLLGYGIFRVIVET, and LMTMGQILSVPMILFGLYLIL. A 1,2-diacyl-sn-glycero-3-phospho-(1'-sn-glycerol) is bound at residue R149.

The protein belongs to the Lgt family.

It localises to the cell inner membrane. It catalyses the reaction L-cysteinyl-[prolipoprotein] + a 1,2-diacyl-sn-glycero-3-phospho-(1'-sn-glycerol) = an S-1,2-diacyl-sn-glyceryl-L-cysteinyl-[prolipoprotein] + sn-glycerol 1-phosphate + H(+). The protein operates within protein modification; lipoprotein biosynthesis (diacylglyceryl transfer). Catalyzes the transfer of the diacylglyceryl group from phosphatidylglycerol to the sulfhydryl group of the N-terminal cysteine of a prolipoprotein, the first step in the formation of mature lipoproteins. This chain is Phosphatidylglycerol--prolipoprotein diacylglyceryl transferase, found in Shewanella oneidensis (strain ATCC 700550 / JCM 31522 / CIP 106686 / LMG 19005 / NCIMB 14063 / MR-1).